The sequence spans 153 residues: Ribonuclease H (153 aa).

The RNase H type-1 domain maps to Met-1–Ser-142. The Mg(2+) site is built by Asp-10, Glu-48, Asp-70, and Asp-134.

This sequence belongs to the RNase H family. As to quaternary structure, monomer. Requires Mg(2+) as cofactor.

It is found in the cytoplasm. The enzyme catalyses Endonucleolytic cleavage to 5'-phosphomonoester.. Functionally, endonuclease that specifically degrades the RNA of RNA-DNA hybrids. The polypeptide is Ribonuclease H (Phenylobacterium zucineum (strain HLK1)).